Reading from the N-terminus, the 275-residue chain is Thiazole synthase (275 aa).

K116 serves as the catalytic Schiff-base intermediate with DXP. 1-deoxy-D-xylulose 5-phosphate is bound by residues G177, 203–204 (AG), and 225–226 (NT).

The protein belongs to the ThiG family. As to quaternary structure, homotetramer. Forms heterodimers with either ThiH or ThiS.

Its subcellular location is the cytoplasm. The catalysed reaction is [ThiS sulfur-carrier protein]-C-terminal-Gly-aminoethanethioate + 2-iminoacetate + 1-deoxy-D-xylulose 5-phosphate = [ThiS sulfur-carrier protein]-C-terminal Gly-Gly + 2-[(2R,5Z)-2-carboxy-4-methylthiazol-5(2H)-ylidene]ethyl phosphate + 2 H2O + H(+). It functions in the pathway cofactor biosynthesis; thiamine diphosphate biosynthesis. Catalyzes the rearrangement of 1-deoxy-D-xylulose 5-phosphate (DXP) to produce the thiazole phosphate moiety of thiamine. Sulfur is provided by the thiocarboxylate moiety of the carrier protein ThiS. In vitro, sulfur can be provided by H(2)S. The protein is Thiazole synthase of Acaryochloris marina (strain MBIC 11017).